A 58-amino-acid polypeptide reads, in one-letter code: MATIKVTQVKSAIGRLPKHRATITGLGLRRINHTVELEDTPAVRGMVNKVHYMVKVEG.

It belongs to the universal ribosomal protein uL30 family. Part of the 50S ribosomal subunit.

This Psychromonas ingrahamii (strain DSM 17664 / CCUG 51855 / 37) protein is Large ribosomal subunit protein uL30.